Here is a 116-residue protein sequence, read N- to C-terminus: Nucleoid-associated protein Tfu_0045 (116 aa).

Belongs to the YbaB/EbfC family. Homodimer.

It localises to the cytoplasm. It is found in the nucleoid. Functionally, binds to DNA and alters its conformation. May be involved in regulation of gene expression, nucleoid organization and DNA protection. This chain is Nucleoid-associated protein Tfu_0045, found in Thermobifida fusca (strain YX).